The following is a 151-amino-acid chain: uncharacterized protein (151 aa).

4 residues coordinate [4Fe-4S] cluster: C24, C27, C92, and C129.

It belongs to the complex I 20 kDa subunit family. The cofactor is [4Fe-4S] cluster.

This is an uncharacterized protein from Methanocaldococcus jannaschii (strain ATCC 43067 / DSM 2661 / JAL-1 / JCM 10045 / NBRC 100440) (Methanococcus jannaschii).